Consider the following 597-residue polypeptide: Elongation factor 4 (597 aa).

The region spanning 2–184 (KHIRNFSIIA…NIVTAIPPPE (183 aa)) is the tr-type G domain. Residues 14–19 (DHGKST) and 131–134 (NKID) each bind GTP.

The protein belongs to the TRAFAC class translation factor GTPase superfamily. Classic translation factor GTPase family. LepA subfamily.

The protein localises to the cell inner membrane. The catalysed reaction is GTP + H2O = GDP + phosphate + H(+). Its function is as follows. Required for accurate and efficient protein synthesis under certain stress conditions. May act as a fidelity factor of the translation reaction, by catalyzing a one-codon backward translocation of tRNAs on improperly translocated ribosomes. Back-translocation proceeds from a post-translocation (POST) complex to a pre-translocation (PRE) complex, thus giving elongation factor G a second chance to translocate the tRNAs correctly. Binds to ribosomes in a GTP-dependent manner. The protein is Elongation factor 4 of Vibrio atlanticus (strain LGP32) (Vibrio splendidus (strain Mel32)).